The following is a 260-amino-acid chain: tRNA pseudouridine synthase A (260 aa).

The active-site Nucleophile is D52. Y110 serves as a coordination point for substrate.

The protein belongs to the tRNA pseudouridine synthase TruA family. As to quaternary structure, homodimer.

The catalysed reaction is uridine(38/39/40) in tRNA = pseudouridine(38/39/40) in tRNA. Its function is as follows. Formation of pseudouridine at positions 38, 39 and 40 in the anticodon stem and loop of transfer RNAs. This Thiobacillus denitrificans (strain ATCC 25259 / T1) protein is tRNA pseudouridine synthase A.